The following is a 210-amino-acid chain: Imidazoleglycerol-phosphate dehydratase (210 aa).

It belongs to the imidazoleglycerol-phosphate dehydratase family.

It localises to the cytoplasm. It carries out the reaction D-erythro-1-(imidazol-4-yl)glycerol 3-phosphate = 3-(imidazol-4-yl)-2-oxopropyl phosphate + H2O. It participates in amino-acid biosynthesis; L-histidine biosynthesis; L-histidine from 5-phospho-alpha-D-ribose 1-diphosphate: step 6/9. The protein is Imidazoleglycerol-phosphate dehydratase of Mycobacterium leprae (strain Br4923).